The following is a 146-amino-acid chain: Hut operon positive regulatory protein (146 aa).

Belongs to the HutP family. As to quaternary structure, homohexamer.

In terms of biological role, antiterminator that binds to cis-acting regulatory sequences on the mRNA in the presence of histidine, thereby suppressing transcription termination and activating the hut operon for histidine utilization. The chain is Hut operon positive regulatory protein from Bacillus cereus (strain G9842).